Here is a 541-residue protein sequence, read N- to C-terminus: GPI alpha-1,2-mannosyltransferase 3 (541 aa).

An N-linked (GlcNAc...) asparagine glycan is attached at Asn-18. Helical transmembrane passes span 53 to 73 (LVLF…TSFV), 126 to 146 (VHLL…IADL), 182 to 202 (LTNT…PLEG), 214 to 234 (LVAL…PLLF), 245 to 265 (DLIL…SLII), 305 to 325 (GFPA…FLAP), 330 to 350 (IFLV…HKEF), 352 to 372 (FIYP…NNLK), and 377 to 397 (PALS…GLVH). Asn-417 is a glycosylation site (N-linked (GlcNAc...) asparagine).

The protein belongs to the glycosyltransferase 22 family. PIGB subfamily.

The protein resides in the endoplasmic reticulum membrane. Its pathway is glycolipid biosynthesis; glycosylphosphatidylinositol-anchor biosynthesis. Alpha-1,2-mannosyltransferase that catalyzes the transfer of the third mannose, via an alpha-1,2 bond, from a dolichol-phosphate-mannose (Dol-P-Man) to an alpha-D-Man-(1-&gt;6)-2-PEtn-alpha-D-Man-(1-&gt;4)-alpha-D-GlcN-(1-&gt;6)-(1-radyl,2-acyl-sn-glycero-3-phospho)-2-acyl-inositol intermediate to generate an alpha-D-Man-(1-&gt;2)-alpha-D-Man-(1-&gt;6)-2-PEtn-alpha-D-Man-(1-&gt;4)-alpha-D-GlcN-(1-&gt;6)-(1-radyl,2-acyl-sn-glycero-3-phospho)-2-acyl-inositol (also termed H6) and participates in the nineth step of the glycosylphosphatidylinositol-anchor biosynthesis. May also add the third mannose to an alpha-D-Man-(1-&gt;6)-alpha-D-Man-(1-&gt;4)-alpha-D-GlcN-(1-&gt;6)-(1-radyl,2-acyl-sn-glycero-3-phospho)-2-acyl-inositol (also termed H3) intermediate generating an alpha-D-Man-(1-&gt;2)-alpha-D-Man-(1-&gt;6)-alpha-D-Man-(1-&gt;4)-alpha-D-GlcN-(1-&gt;6)-(1-radyl,2-acyl-sn-glycero-3-phospho)-2-acyl-inositol (also termed H4). The chain is GPI alpha-1,2-mannosyltransferase 3 from Bos taurus (Bovine).